Reading from the N-terminus, the 263-residue chain is 3'-5' ssDNA/RNA exonuclease TatD (263 aa).

3 residues coordinate a divalent metal cation: Glu91, His127, and His152.

It belongs to the metallo-dependent hydrolases superfamily. TatD-type hydrolase family. TatD subfamily. In terms of assembly, monomer. Mg(2+) serves as cofactor.

The protein resides in the cytoplasm. 3'-5' exonuclease that prefers single-stranded DNA and RNA. May play a role in the H(2)O(2)-induced DNA damage repair. The chain is 3'-5' ssDNA/RNA exonuclease TatD from Cronobacter sakazakii (strain ATCC BAA-894) (Enterobacter sakazakii).